The chain runs to 603 residues: Aspartate--tRNA(Asp/Asn) ligase (603 aa).

Glu172 contributes to the L-aspartate binding site. Positions 196 to 199 (QLFK) are aspartate. Residue Arg218 coordinates L-aspartate. ATP-binding positions include 218 to 220 (RDE) and Gln227. His457 is a binding site for L-aspartate. Glu491 contributes to the ATP binding site. Arg498 contacts L-aspartate. 543 to 546 (GLDR) lines the ATP pocket.

The protein belongs to the class-II aminoacyl-tRNA synthetase family. Type 1 subfamily. Homodimer.

Its subcellular location is the cytoplasm. The catalysed reaction is tRNA(Asx) + L-aspartate + ATP = L-aspartyl-tRNA(Asx) + AMP + diphosphate. In terms of biological role, aspartyl-tRNA synthetase with relaxed tRNA specificity since it is able to aspartylate not only its cognate tRNA(Asp) but also tRNA(Asn). Reaction proceeds in two steps: L-aspartate is first activated by ATP to form Asp-AMP and then transferred to the acceptor end of tRNA(Asp/Asn). This Laribacter hongkongensis (strain HLHK9) protein is Aspartate--tRNA(Asp/Asn) ligase.